A 265-amino-acid chain; its full sequence is 3-methyl-2-oxobutanoate hydroxymethyltransferase (265 aa).

Mg(2+) contacts are provided by Asp-45 and Asp-84. Residues 45–46, Asp-84, and Lys-112 each bind 3-methyl-2-oxobutanoate; that span reads DS. Glu-114 contacts Mg(2+). Glu-181 (proton acceptor) is an active-site residue.

This sequence belongs to the PanB family. In terms of assembly, homodecamer; pentamer of dimers. The cofactor is Mg(2+).

The protein localises to the cytoplasm. The enzyme catalyses 3-methyl-2-oxobutanoate + (6R)-5,10-methylene-5,6,7,8-tetrahydrofolate + H2O = 2-dehydropantoate + (6S)-5,6,7,8-tetrahydrofolate. It functions in the pathway cofactor biosynthesis; (R)-pantothenate biosynthesis; (R)-pantoate from 3-methyl-2-oxobutanoate: step 1/2. Catalyzes the reversible reaction in which hydroxymethyl group from 5,10-methylenetetrahydrofolate is transferred onto alpha-ketoisovalerate to form ketopantoate. The sequence is that of 3-methyl-2-oxobutanoate hydroxymethyltransferase from Yersinia enterocolitica serotype O:8 / biotype 1B (strain NCTC 13174 / 8081).